The sequence spans 332 residues: Holliday junction branch migration complex subunit RuvB (332 aa).

Positions 1-181 are large ATPase domain (RuvB-L); that stretch reads MSRILDNELM…FGITGHMEYY (181 aa). Residues L20, R21, G62, K65, T66, T67, 128–130, R171, Y181, and R218 each bind ATP; that span reads EDF. T66 contacts Mg(2+). The segment at 182–252 is small ATPAse domain (RuvB-S); the sequence is EAGDLTEIVE…ITDQALSMLD (71 aa). The segment at 255–332 is head domain (RuvB-H); sequence QEGLDYVDQK…EHLGYEYMKE (78 aa). Residues R291, R310, R312, and R315 each coordinate DNA.

It belongs to the RuvB family. Homohexamer. Forms an RuvA(8)-RuvB(12)-Holliday junction (HJ) complex. HJ DNA is sandwiched between 2 RuvA tetramers; dsDNA enters through RuvA and exits via RuvB. An RuvB hexamer assembles on each DNA strand where it exits the tetramer. Each RuvB hexamer is contacted by two RuvA subunits (via domain III) on 2 adjacent RuvB subunits; this complex drives branch migration. In the full resolvosome a probable DNA-RuvA(4)-RuvB(12)-RuvC(2) complex forms which resolves the HJ.

It is found in the cytoplasm. It catalyses the reaction ATP + H2O = ADP + phosphate + H(+). The RuvA-RuvB-RuvC complex processes Holliday junction (HJ) DNA during genetic recombination and DNA repair, while the RuvA-RuvB complex plays an important role in the rescue of blocked DNA replication forks via replication fork reversal (RFR). RuvA specifically binds to HJ cruciform DNA, conferring on it an open structure. The RuvB hexamer acts as an ATP-dependent pump, pulling dsDNA into and through the RuvAB complex. RuvB forms 2 homohexamers on either side of HJ DNA bound by 1 or 2 RuvA tetramers; 4 subunits per hexamer contact DNA at a time. Coordinated motions by a converter formed by DNA-disengaged RuvB subunits stimulates ATP hydrolysis and nucleotide exchange. Immobilization of the converter enables RuvB to convert the ATP-contained energy into a lever motion, pulling 2 nucleotides of DNA out of the RuvA tetramer per ATP hydrolyzed, thus driving DNA branch migration. The RuvB motors rotate together with the DNA substrate, which together with the progressing nucleotide cycle form the mechanistic basis for DNA recombination by continuous HJ branch migration. Branch migration allows RuvC to scan DNA until it finds its consensus sequence, where it cleaves and resolves cruciform DNA. This is Holliday junction branch migration complex subunit RuvB from Streptococcus sanguinis (strain SK36).